Reading from the N-terminus, the 249-residue chain is Small ribosomal subunit protein eS6 (249 aa).

Over residues 223–238 the composition is skewed to basic residues; sequence LRQRDHSKKHTRKVHA. Residues 223–249 are disordered; the sequence is LRQRDHSKKHTRKVHAQRAEVAAFQKK.

The protein belongs to the eukaryotic ribosomal protein eS6 family. In terms of processing, ribosomal protein S6 is the major substrate of protein kinases in eukaryote ribosomes.

In terms of biological role, component of the 40S small ribosomal subunit. Plays an important role in controlling cell growth and proliferation through the selective translation of particular classes of mRNA. The polypeptide is Small ribosomal subunit protein eS6 (RPS6) (Leishmania major).